The following is a 94-amino-acid chain: Integration host factor subunit beta (94 aa).

It belongs to the bacterial histone-like protein family. Heterodimer of an alpha and a beta chain.

This protein is one of the two subunits of integration host factor, a specific DNA-binding protein that functions in genetic recombination as well as in transcriptional and translational control. This is Integration host factor subunit beta from Buchnera aphidicola subsp. Acyrthosiphon pisum (strain 5A).